A 640-amino-acid polypeptide reads, in one-letter code: Choline O-acetyltransferase (640 aa).

Residue S17 is modified to Phosphoserine. The Proton acceptor role is filled by H334. The residue at position 365 (S365) is a Phosphoserine. CoA is bound by residues 412 to 424, S450, and Q551; that span reads GKTF…YSPD. Positions 614–640 are disordered; it reads CSSRQPADSKPPAPKEKARGPSQAKQS.

This sequence belongs to the carnitine/choline acetyltransferase family. As to quaternary structure, monomer.

It carries out the reaction choline + acetyl-CoA = acetylcholine + CoA. Functionally, catalyzes the reversible synthesis of acetylcholine (ACh) from acetyl CoA and choline at cholinergic synapses. The protein is Choline O-acetyltransferase (Chat) of Rattus norvegicus (Rat).